The following is a 311-amino-acid chain: 2-methoxy-6-polyprenyl-1,4-benzoquinol methylase, mitochondrial (311 aa).

Residues 1–29 (MAAGLCPGRALLSRRGGALWALLGTARGR) constitute a mitochondrion transit peptide. S-adenosyl-L-methionine is bound by residues threonine 100, aspartate 155, and 183–184 (NA).

This sequence belongs to the class I-like SAM-binding methyltransferase superfamily. MenG/UbiE family. In terms of assembly, component of a multi-subunit COQ enzyme complex, composed of at least COQ3, COQ4, COQ5, COQ6, COQ7 and COQ9.

It is found in the mitochondrion inner membrane. The enzyme catalyses a 2-methoxy-6-(all-trans-polyprenyl)benzene-1,4-diol + S-adenosyl-L-methionine = a 5-methoxy-2-methyl-3-(all-trans-polyprenyl)benzene-1,4-diol + S-adenosyl-L-homocysteine + H(+). It participates in cofactor biosynthesis; ubiquinone biosynthesis. Its function is as follows. Methyltransferase required for the conversion of 2-polyprenyl-6-methoxy-1,4-benzoquinol (DDMQH2) to 2-polyprenyl-3-methyl-6-methoxy-1,4-benzoquinol (DMQH2). This chain is 2-methoxy-6-polyprenyl-1,4-benzoquinol methylase, mitochondrial, found in Gallus gallus (Chicken).